Reading from the N-terminus, the 202-residue chain is uncharacterized protein (202 aa).

Residues 13–73 enclose the HTH tetR-type domain; the sequence is ELAADRILDA…AYVHRETRRL (61 aa). Positions 36–55 form a DNA-binding region, H-T-H motif; the sequence is GMNEIAKAAGCSRATLYRYF.

This is an uncharacterized protein from Mycobacterium tuberculosis (strain CDC 1551 / Oshkosh).